The following is a 145-amino-acid chain: 3-hydroxyacyl-[acyl-carrier-protein] dehydratase FabZ (145 aa).

His-47 is an active-site residue.

The protein belongs to the thioester dehydratase family. FabZ subfamily.

The protein localises to the cytoplasm. The catalysed reaction is a (3R)-hydroxyacyl-[ACP] = a (2E)-enoyl-[ACP] + H2O. Involved in unsaturated fatty acids biosynthesis. Catalyzes the dehydration of short chain beta-hydroxyacyl-ACPs and long chain saturated and unsaturated beta-hydroxyacyl-ACPs. This Polaromonas sp. (strain JS666 / ATCC BAA-500) protein is 3-hydroxyacyl-[acyl-carrier-protein] dehydratase FabZ.